We begin with the raw amino-acid sequence, 594 residues long: Zinc finger protein 467 (594 aa).

The tract at residues 1–70 (MRETLEALNS…HTEQAEAPCM (70 aa)) is disordered. Residue K97 forms a Glycyl lysine isopeptide (Lys-Gly) (interchain with G-Cter in SUMO2) linkage. C2H2-type zinc fingers lie at residues 160-182 (YGCE…QRLH), 188-210 (CACP…QRSH), 216-238 (FPCS…LRTH), 244-266 (YPCA…QKTH), 272-294 (FPCT…QRIH), 300-322 (YQCT…QRVH), 355-377 (FACS…QSLH), 430-452 (FFCP…RRVH), 458-480 (FACA…SRAH), 486-508 (FACA…QAVH), 514-536 (HACA…QAIH), and 542-564 (FSCP…QRIH). The tract at residues 313–350 (QHLVRHQRVHDAASRTRSSPDIPATPHPPTASLAPSPT) is disordered. A Glycyl lysine isopeptide (Lys-Gly) (interchain with G-Cter in SUMO2) cross-link involves residue K368.

This sequence belongs to the krueppel C2H2-type zinc-finger protein family. Interacts with STAT3. Enhances STAT3 activity by keeping it in the nucleus.

It is found in the nucleus. Transcription factor that promotes adipocyte differentiation and suppresses osteoblast differentiation in the bone marrow. Enhances the osteoclast-supporting ability of stromal cells. Binds with STAT3 the consensus sequence 5'-CTTCTGGGAAGA-3' of the acute phase response element (APRE). Transactivates several promoters including FOS, OSM and PPARG. Recruits a histone deacetylase complex. This is Zinc finger protein 467 (Znf467) from Rattus norvegicus (Rat).